The chain runs to 412 residues: Na(+)-translocating NADH-quinone reductase subunit B (412 aa).

Helical transmembrane passes span 57-77 (MILV…NVGL), 127-147 (VFFL…EVLF), and 163-183 (SILF…ALGI). The residue at position 236 (threonine 236) is an FMN phosphoryl threonine. Transmembrane regions (helical) follow at residues 270 to 290 (GSIG…ILFG), 297 to 317 (IVAG…VIGS), 322 to 342 (MFAM…GMMF), 358 to 378 (WSYG…NPAY), and 381 to 401 (GMML…YLVV).

The protein belongs to the NqrB/RnfD family. As to quaternary structure, composed of six subunits; NqrA, NqrB, NqrC, NqrD, NqrE and NqrF. It depends on FMN as a cofactor.

It is found in the cell inner membrane. It carries out the reaction a ubiquinone + n Na(+)(in) + NADH + H(+) = a ubiquinol + n Na(+)(out) + NAD(+). In terms of biological role, NQR complex catalyzes the reduction of ubiquinone-1 to ubiquinol by two successive reactions, coupled with the transport of Na(+) ions from the cytoplasm to the periplasm. NqrA to NqrE are probably involved in the second step, the conversion of ubisemiquinone to ubiquinol. The protein is Na(+)-translocating NADH-quinone reductase subunit B of Klebsiella pneumoniae subsp. pneumoniae (strain ATCC 700721 / MGH 78578).